The chain runs to 166 residues: NAD(P)H-quinone oxidoreductase subunit I, chloroplastic (166 aa).

4Fe-4S ferredoxin-type domains are found at residues 55-84 (GRIH…VDWK) and 95-124 (LNYS…MTEE). [4Fe-4S] cluster-binding residues include cysteine 64, cysteine 67, cysteine 70, cysteine 74, cysteine 104, cysteine 107, cysteine 110, and cysteine 114.

It belongs to the complex I 23 kDa subunit family. In terms of assembly, NDH is composed of at least 16 different subunits, 5 of which are encoded in the nucleus. [4Fe-4S] cluster is required as a cofactor.

The protein localises to the plastid. Its subcellular location is the chloroplast thylakoid membrane. The enzyme catalyses a plastoquinone + NADH + (n+1) H(+)(in) = a plastoquinol + NAD(+) + n H(+)(out). The catalysed reaction is a plastoquinone + NADPH + (n+1) H(+)(in) = a plastoquinol + NADP(+) + n H(+)(out). Its function is as follows. NDH shuttles electrons from NAD(P)H:plastoquinone, via FMN and iron-sulfur (Fe-S) centers, to quinones in the photosynthetic chain and possibly in a chloroplast respiratory chain. The immediate electron acceptor for the enzyme in this species is believed to be plastoquinone. Couples the redox reaction to proton translocation, and thus conserves the redox energy in a proton gradient. This Bahiopsis tomentosa (Tecote) protein is NAD(P)H-quinone oxidoreductase subunit I, chloroplastic.